Consider the following 311-residue polypeptide: Ornithine carbamoyltransferase (311 aa).

Carbamoyl phosphate is bound by residues Ser59–Thr62, Gln86, Arg110, and His137–Gln140. Residues Asn168, Asp228, and Ser232–Met233 each bind L-ornithine. Carbamoyl phosphate-binding positions include Cys267 to Leu268 and Arg295.

It belongs to the aspartate/ornithine carbamoyltransferase superfamily. OTCase family.

It localises to the cytoplasm. The catalysed reaction is carbamoyl phosphate + L-ornithine = L-citrulline + phosphate + H(+). The protein operates within amino-acid biosynthesis; L-arginine biosynthesis; L-arginine from L-ornithine and carbamoyl phosphate: step 1/3. Its function is as follows. Reversibly catalyzes the transfer of the carbamoyl group from carbamoyl phosphate (CP) to the N(epsilon) atom of ornithine (ORN) to produce L-citrulline. In Caulobacter vibrioides (strain ATCC 19089 / CIP 103742 / CB 15) (Caulobacter crescentus), this protein is Ornithine carbamoyltransferase.